We begin with the raw amino-acid sequence, 94 residues long: Integration host factor subunit beta (94 aa).

It belongs to the bacterial histone-like protein family. In terms of assembly, heterodimer of an alpha and a beta chain.

Functionally, this protein is one of the two subunits of integration host factor, a specific DNA-binding protein that functions in genetic recombination as well as in transcriptional and translational control. The polypeptide is Integration host factor subunit beta (ihfB) (Dickeya dadantii (strain 3937) (Erwinia chrysanthemi (strain 3937))).